A 454-amino-acid chain; its full sequence is Protection of telomeres protein 1b (454 aa).

Belongs to the telombin family. Interacts with TRB1, TRB2 and TRB3. Expressed at low levels in roots, rosette leaves, cauline leaves, stems and flowers.

It localises to the nucleus. It is found in the chromosome. The protein localises to the telomere. Its function is as follows. Negatively regulates telomerase activity and participates in chromosome end protection. Binds RNA non-specifically. Associates with a regulatory Pol III-dependent lncRNA, which represses telomerase activity in response to DNA damage. Binds single-stranded telomeric DNA with weak affinity. The chain is Protection of telomeres protein 1b from Arabidopsis thaliana (Mouse-ear cress).